The following is a 661-amino-acid chain: UvrABC system protein B (661 aa).

The Helicase ATP-binding domain occupies 25 to 414 (AGLNSKKRSQ…DTVVELIIRP (390 aa)). 38–45 (GITGSGKT) lines the ATP pocket. The Beta-hairpin signature appears at 91–114 (YYDYYQPEAYIARTDTFIEKDSSI). Residues 430 to 592 (QVEDLIGEIQ…IIPKTINRAI (163 aa)) enclose the Helicase C-terminal domain. Residues 621–656 (KAHIEKLKKDMLKAASNLEFEQAAKLRDQLKTLEEA) form the UVR domain.

It belongs to the UvrB family. As to quaternary structure, forms a heterotetramer with UvrA during the search for lesions. Interacts with UvrC in an incision complex.

The protein resides in the cytoplasm. The UvrABC repair system catalyzes the recognition and processing of DNA lesions. A damage recognition complex composed of 2 UvrA and 2 UvrB subunits scans DNA for abnormalities. Upon binding of the UvrA(2)B(2) complex to a putative damaged site, the DNA wraps around one UvrB monomer. DNA wrap is dependent on ATP binding by UvrB and probably causes local melting of the DNA helix, facilitating insertion of UvrB beta-hairpin between the DNA strands. Then UvrB probes one DNA strand for the presence of a lesion. If a lesion is found the UvrA subunits dissociate and the UvrB-DNA preincision complex is formed. This complex is subsequently bound by UvrC and the second UvrB is released. If no lesion is found, the DNA wraps around the other UvrB subunit that will check the other stand for damage. This chain is UvrABC system protein B, found in Rickettsia felis (strain ATCC VR-1525 / URRWXCal2) (Rickettsia azadi).